A 115-amino-acid polypeptide reads, in one-letter code: Rapid alkalinization factor (115 aa).

The first 23 residues, 1–23 (MGVPSGLILCVLIGAFFISMAAA), serve as a signal peptide directing secretion. The propeptide at 24-66 (GDSGAYDWVMPARSGGGCKGSIGECIAEEEEFELDSESNRRIL) is removed in mature form. Cystine bridges form between C84–C94 and C107–C113.

Proteolytically cleaved, probably by S1P, a subtilisin-like serine protease (subtilase).

It is found in the secreted. Cell signaling peptide that may regulate plant stress, growth, and development. Mediates a rapid alkalinization of extracellular space by mediating a transient increase in the cytoplasmic Ca(2+) concentration leading to a calcium-dependent signaling events through a cell surface receptor and a concomitant activation of some intracellular mitogen-activated protein kinases. Prevents root growth and seedling development in heterologous system. The chain is Rapid alkalinization factor (RALF) from Nicotiana tabacum (Common tobacco).